A 507-amino-acid chain; its full sequence is Histidine ammonia-lyase (507 aa).

The segment at residues 145-147 (ASG) is a cross-link (5-imidazolinone (Ala-Gly)). The residue at position 146 (S146) is a 2,3-didehydroalanine (Ser).

Belongs to the PAL/histidase family. Contains an active site 4-methylidene-imidazol-5-one (MIO), which is formed autocatalytically by cyclization and dehydration of residues Ala-Ser-Gly.

The protein resides in the cytoplasm. The catalysed reaction is L-histidine = trans-urocanate + NH4(+). It participates in amino-acid degradation; L-histidine degradation into L-glutamate; N-formimidoyl-L-glutamate from L-histidine: step 1/3. This chain is Histidine ammonia-lyase, found in Treponema denticola (strain ATCC 35405 / DSM 14222 / CIP 103919 / JCM 8153 / KCTC 15104).